A 247-amino-acid chain; its full sequence is Granzyme B (247 aa).

The first 18 residues, 1–18 (MQPILLLLAFLLLPRADA), serve as a signal peptide directing secretion. The propeptide at 19–20 (GE) is activation peptide. A Peptidase S1 domain is found at 21–245 (IIGGHEAKPH…FVHWIKKTMK (225 aa)). A disulfide bond links C49 and C65. The active-site Charge relay system is H64. 2 N-linked (GlcNAc...) asparagine glycosylation sites follow: N71 and N104. D108 serves as the catalytic Charge relay system. 2 cysteine pairs are disulfide-bonded: C142/C209 and C173/C188. S203 (charge relay system) is an active-site residue.

The protein belongs to the peptidase S1 family. Granzyme subfamily.

Its subcellular location is the secreted. The protein localises to the cytolytic granule. The catalysed reaction is Preferential cleavage: -Asp-|-Xaa- &gt;&gt; -Asn-|-Xaa- &gt; -Met-|-Xaa-, -Ser-|-Xaa-.. With respect to regulation, inactivated by the serine protease inhibitor diisopropylfluorophosphate. Functionally, abundant protease in the cytosolic granules of cytotoxic T-cells and NK-cells which activates caspase-independent pyroptosis when delivered into the target cell through the immunological synapse. It cleaves after Asp. Once delivered into the target cell, acts by catalyzing cleavage of gasdermin-E (GSDME), releasing the pore-forming moiety of GSDME, thereby triggering pyroptosis and target cell death. Seems to be linked to an activation cascade of caspases (aspartate-specific cysteine proteases) responsible for apoptosis execution. Cleaves caspase-3, -9 and -10 (CASP3, CASP9 and CASP10, respectively) to give rise to active enzymes mediating apoptosis. Cleaves and activates CASP7 in response to bacterial infection, promoting plasma membrane repair. The protein is Granzyme B of Homo sapiens (Human).